The sequence spans 502 residues: Lysine--tRNA ligase (502 aa).

Mg(2+)-binding residues include Glu-412 and Glu-419.

It belongs to the class-II aminoacyl-tRNA synthetase family. Homodimer. Mg(2+) serves as cofactor.

It localises to the cytoplasm. It catalyses the reaction tRNA(Lys) + L-lysine + ATP = L-lysyl-tRNA(Lys) + AMP + diphosphate. The polypeptide is Lysine--tRNA ligase (Buchnera aphidicola subsp. Cinara cedri (strain Cc)).